The sequence spans 466 residues: Ribulose bisphosphate carboxylase large chain (466 aa).

The residue at position 5 (Lys5) is an N6,N6,N6-trimethyllysine. Substrate-binding residues include Asn114 and Thr164. Residue Lys166 is the Proton acceptor of the active site. Residue Lys168 participates in substrate binding. Mg(2+)-binding residues include Lys192, Asp194, and Glu195. Lys192 carries the post-translational modification N6-carboxylysine. His285 serves as the catalytic Proton acceptor. Residues Arg286, His318, and Ser370 each coordinate substrate.

It belongs to the RuBisCO large chain family. Type I subfamily. Heterohexadecamer of 8 large chains and 8 small chains; disulfide-linked. The disulfide link is formed within the large subunit homodimers. Mg(2+) is required as a cofactor. The disulfide bond which can form in the large chain dimeric partners within the hexadecamer appears to be associated with oxidative stress and protein turnover.

Its subcellular location is the plastid. It is found in the chloroplast. The enzyme catalyses 2 (2R)-3-phosphoglycerate + 2 H(+) = D-ribulose 1,5-bisphosphate + CO2 + H2O. The catalysed reaction is D-ribulose 1,5-bisphosphate + O2 = 2-phosphoglycolate + (2R)-3-phosphoglycerate + 2 H(+). RuBisCO catalyzes two reactions: the carboxylation of D-ribulose 1,5-bisphosphate, the primary event in carbon dioxide fixation, as well as the oxidative fragmentation of the pentose substrate in the photorespiration process. Both reactions occur simultaneously and in competition at the same active site. The protein is Ribulose bisphosphate carboxylase large chain of Silene gallica (Common catchfly).